A 673-amino-acid chain; its full sequence is Paralemmin-3 (673 aa).

Coiled coils occupy residues serine 4 to arginine 49 and glycine 75 to alanine 101. 2 disordered regions span residues arginine 49–glutamine 78 and glutamine 99–lysine 213. The segment covering leucine 123–aspartate 137 has biased composition (polar residues). Serine 124 and serine 143 each carry phosphoserine. Threonine 151 carries the post-translational modification Phosphothreonine. 3 positions are modified to phosphoserine: serine 155, serine 157, and serine 260. Disordered regions lie at residues valine 295 to tryptophan 343 and leucine 356 to methionine 673. Position 301 is a phosphothreonine (threonine 301). Phosphoserine is present on serine 325. Over residues glutamate 327–glutamate 338 the composition is skewed to gly residues. A phosphoserine mark is found at serine 375 and serine 420. Composition is skewed to basic and acidic residues over residues glutamate 392–alanine 477 and glycine 487–glutamine 532. A phosphoserine mark is found at serine 544 and serine 660. S-palmitoyl cysteine attachment occurs at residues cysteine 667 and cysteine 669. Position 670 is a cysteine methyl ester (cysteine 670). Residue cysteine 670 is the site of S-farnesyl cysteine attachment. The propeptide at alanine 671 to methionine 673 is removed in mature form.

The protein belongs to the paralemmin family. In terms of assembly, interacts with SIGIRR. Palmitoylated on Cys-667 and Cys-669 and prenylated on Cys-670; which is required for membrane association.

Its subcellular location is the cytoplasm. The protein localises to the cell membrane. Functionally, ATP-binding protein, which may act as a adapter in the Toll-like receptor (TLR) signaling. The sequence is that of Paralemmin-3 (PALM3) from Homo sapiens (Human).